Here is a 645-residue protein sequence, read N- to C-terminus: 1-deoxy-D-xylulose-5-phosphate synthase (645 aa).

Residues His-87 and 128–130 each bind thiamine diphosphate; that span reads GHS. A Mg(2+)-binding site is contributed by Asp-159. Residues 160-161, Asn-188, Phe-295, and Glu-384 each bind thiamine diphosphate; that span reads GA. Asn-188 serves as a coordination point for Mg(2+).

This sequence belongs to the transketolase family. DXPS subfamily. In terms of assembly, homodimer. Requires Mg(2+) as cofactor. Thiamine diphosphate serves as cofactor.

It carries out the reaction D-glyceraldehyde 3-phosphate + pyruvate + H(+) = 1-deoxy-D-xylulose 5-phosphate + CO2. Its pathway is metabolic intermediate biosynthesis; 1-deoxy-D-xylulose 5-phosphate biosynthesis; 1-deoxy-D-xylulose 5-phosphate from D-glyceraldehyde 3-phosphate and pyruvate: step 1/1. In terms of biological role, catalyzes the acyloin condensation reaction between C atoms 2 and 3 of pyruvate and glyceraldehyde 3-phosphate to yield 1-deoxy-D-xylulose-5-phosphate (DXP). The sequence is that of 1-deoxy-D-xylulose-5-phosphate synthase from Alcanivorax borkumensis (strain ATCC 700651 / DSM 11573 / NCIMB 13689 / SK2).